The sequence spans 284 residues: Thymidylate synthase (284 aa).

Arg-34 is a binding site for dUMP. His-64 lines the (6R)-5,10-methylene-5,6,7,8-tetrahydrofolate pocket. Residue 139 to 140 coordinates dUMP; that stretch reads RR. Residue Cys-159 is the Nucleophile of the active site. DUMP is bound by residues 186-189, Asn-197, and 227-229; these read RSAD and HIY. Residue Asp-189 coordinates (6R)-5,10-methylene-5,6,7,8-tetrahydrofolate. Ala-283 provides a ligand contact to (6R)-5,10-methylene-5,6,7,8-tetrahydrofolate.

It belongs to the thymidylate synthase family. Bacterial-type ThyA subfamily. In terms of assembly, homodimer.

It localises to the cytoplasm. It carries out the reaction dUMP + (6R)-5,10-methylene-5,6,7,8-tetrahydrofolate = 7,8-dihydrofolate + dTMP. It functions in the pathway pyrimidine metabolism; dTTP biosynthesis. Its function is as follows. Catalyzes the reductive methylation of 2'-deoxyuridine-5'-monophosphate (dUMP) to 2'-deoxythymidine-5'-monophosphate (dTMP) while utilizing 5,10-methylenetetrahydrofolate (mTHF) as the methyl donor and reductant in the reaction, yielding dihydrofolate (DHF) as a by-product. This enzymatic reaction provides an intracellular de novo source of dTMP, an essential precursor for DNA biosynthesis. The polypeptide is Thymidylate synthase (Polaromonas sp. (strain JS666 / ATCC BAA-500)).